A 77-amino-acid polypeptide reads, in one-letter code: Small ribosomal subunit protein uS17 (77 aa).

The protein belongs to the universal ribosomal protein uS17 family. As to quaternary structure, part of the 30S ribosomal subunit.

Functionally, one of the primary rRNA binding proteins, it binds specifically to the 5'-end of 16S ribosomal RNA. The chain is Small ribosomal subunit protein uS17 from Anaplasma marginale (strain St. Maries).